We begin with the raw amino-acid sequence, 392 residues long: Phosphoglycerate kinase (392 aa).

Substrate contacts are provided by residues 21–23 (DFN), arginine 36, 59–62 (HLGR), arginine 118, and arginine 151. ATP contacts are provided by residues lysine 202, glutamate 321, and 347–350 (GGDS).

It belongs to the phosphoglycerate kinase family. In terms of assembly, monomer.

Its subcellular location is the cytoplasm. It catalyses the reaction (2R)-3-phosphoglycerate + ATP = (2R)-3-phospho-glyceroyl phosphate + ADP. It functions in the pathway carbohydrate degradation; glycolysis; pyruvate from D-glyceraldehyde 3-phosphate: step 2/5. The chain is Phosphoglycerate kinase from Symbiobacterium thermophilum (strain DSM 24528 / JCM 14929 / IAM 14863 / T).